A 459-amino-acid polypeptide reads, in one-letter code: Chromosomal replication initiator protein DnaA (459 aa).

The interval 1 to 74 (MMEMPIDNLW…ANVVQSILGH (74 aa)) is domain I, interacts with DnaA modulators. The domain II stretch occupies residues 74–117 (HPVEIYITVAKGEEFEEIGGGGEWELPTTNIINETPNQNRQPNT). The segment at 118–334 (ELNAKYVFSR…GALTRALAYI (217 aa)) is domain III, AAA+ region. ATP is bound by residues glycine 162, glycine 164, lysine 165, and threonine 166. Residues 335–459 (SIWGLPMTVA…IKMNSRSRKP (125 aa)) form a domain IV, binds dsDNA region.

It belongs to the DnaA family. As to quaternary structure, oligomerizes as a right-handed, spiral filament on DNA at oriC.

It localises to the cytoplasm. In terms of biological role, plays an essential role in the initiation and regulation of chromosomal replication. ATP-DnaA binds to the origin of replication (oriC) to initiate formation of the DNA replication initiation complex once per cell cycle. Binds the DnaA box (a 9 base pair repeat at the origin) and separates the double-stranded (ds)DNA. Forms a right-handed helical filament on oriC DNA; dsDNA binds to the exterior of the filament while single-stranded (ss)DNA is stabiized in the filament's interior. The ATP-DnaA-oriC complex binds and stabilizes one strand of the AT-rich DNA unwinding element (DUE), permitting loading of DNA polymerase. After initiation quickly degrades to an ADP-DnaA complex that is not apt for DNA replication. Binds acidic phospholipids. In Nostoc sp. (strain PCC 7120 / SAG 25.82 / UTEX 2576), this protein is Chromosomal replication initiator protein DnaA.